The sequence spans 226 residues: RNA-binding protein 24 (226 aa).

An RRM domain is found at 11 to 88 (TKIFVGGLPY…RKANVNLAYL (78 aa)).

The protein resides in the nucleus. It is found in the cytoplasm. In terms of biological role, multifunctional RNA-binding protein involved in the regulation of pre-mRNA splicing, mRNA stability and mRNA translation important for cell fate decision and differentiation. Plays a major role in pre-mRNA alternative splicing regulation. Mediates preferentially muscle-specific exon inclusion in numerous mRNAs important for striated cardiac and skeletal muscle cell differentiation. Binds to intronic splicing enhancer (ISE) composed of stretches of GU-rich motifs localized in flanking intron of exon that will be included by alternative splicing. Involved in embryonic stem cell (ESC) transition to cardiac cell differentiation by promoting pre-mRNA alternative splicing events of several pluripotency and/or differentiation genes. Plays a role in the regulation of mRNA stability and mRNA translation to which it is bound. Involved in myogenic differentiation by regulating myog levels. Binds to a huge amount of mRNAs. Required for embryonic heart development, sarcomer and M-band formation in striated muscles. The chain is RNA-binding protein 24 (rbm24) from Xenopus tropicalis (Western clawed frog).